We begin with the raw amino-acid sequence, 333 residues long: uncharacterized protein (333 aa).

Residues 1–23 form the signal peptide; that stretch reads MSRSFMIILTIMLIALSLGEVLA. A helical membrane pass occupies residues 232 to 252; the sequence is SFFLGVLVTLMILSPVIVYLW.

The protein localises to the membrane. This is an uncharacterized protein from Pyrococcus abyssi (strain GE5 / Orsay).